The sequence spans 40 residues: Photosystem II reaction center protein J (40 aa).

A helical membrane pass occupies residues 8–28 (IPLWLIGTIAGILVIGLVGIF).

It belongs to the PsbJ family. As to quaternary structure, PSII is composed of 1 copy each of membrane proteins PsbA, PsbB, PsbC, PsbD, PsbE, PsbF, PsbH, PsbI, PsbJ, PsbK, PsbL, PsbM, PsbT, PsbX, PsbY, PsbZ, Psb30/Ycf12, at least 3 peripheral proteins of the oxygen-evolving complex and a large number of cofactors. It forms dimeric complexes.

The protein localises to the plastid. It is found in the chloroplast thylakoid membrane. In terms of biological role, one of the components of the core complex of photosystem II (PSII). PSII is a light-driven water:plastoquinone oxidoreductase that uses light energy to abstract electrons from H(2)O, generating O(2) and a proton gradient subsequently used for ATP formation. It consists of a core antenna complex that captures photons, and an electron transfer chain that converts photonic excitation into a charge separation. In Anthoceros angustus (Hornwort), this protein is Photosystem II reaction center protein J.